Reading from the N-terminus, the 180-residue chain is NADH-quinone oxidoreductase subunit I (180 aa).

4Fe-4S ferredoxin-type domains are found at residues 46–80 (GRIV…LQKT) and 90–119 (EFFR…LTPD). [4Fe-4S] cluster is bound by residues Cys-60, Cys-63, Cys-66, Cys-70, Cys-99, Cys-102, Cys-105, and Cys-109.

It belongs to the complex I 23 kDa subunit family. As to quaternary structure, NDH-1 is composed of 14 different subunits. Subunits NuoA, H, J, K, L, M, N constitute the membrane sector of the complex. [4Fe-4S] cluster is required as a cofactor.

The protein localises to the cell membrane. The catalysed reaction is a quinone + NADH + 5 H(+)(in) = a quinol + NAD(+) + 4 H(+)(out). In terms of biological role, NDH-1 shuttles electrons from NADH, via FMN and iron-sulfur (Fe-S) centers, to quinones in the respiratory chain. The immediate electron acceptor for the enzyme in this species is believed to be ubiquinone. Couples the redox reaction to proton translocation (for every two electrons transferred, four hydrogen ions are translocated across the cytoplasmic membrane), and thus conserves the redox energy in a proton gradient. This Baumannia cicadellinicola subsp. Homalodisca coagulata protein is NADH-quinone oxidoreductase subunit I.